A 117-amino-acid polypeptide reads, in one-letter code: MRKSYRIKKESEFQRVFETHNSVANHKFVVYQMEKPGQKHFRVGISVGKKIGNAVHRNWVKRRIRQTLLEVKPQLRSDVDFLVIARSAADGLSMAETKKNLVHVLNRAHLLDEKSED.

Belongs to the RnpA family. Consists of a catalytic RNA component (M1 or rnpB) and a protein subunit.

The enzyme catalyses Endonucleolytic cleavage of RNA, removing 5'-extranucleotides from tRNA precursor.. In terms of biological role, RNaseP catalyzes the removal of the 5'-leader sequence from pre-tRNA to produce the mature 5'-terminus. It can also cleave other RNA substrates such as 4.5S RNA. The protein component plays an auxiliary but essential role in vivo by binding to the 5'-leader sequence and broadening the substrate specificity of the ribozyme. The sequence is that of Ribonuclease P protein component from Limosilactobacillus reuteri subsp. reuteri (strain JCM 1112) (Lactobacillus reuteri).